The chain runs to 312 residues: Olfactory receptor 1F1 (312 aa).

Residues 1–25 (MSGTNQSSVSEFLLLGLSRQPQQQH) are Extracellular-facing. Asn-5 carries an N-linked (GlcNAc...) asparagine glycan. Residues 26-49 (LLFVFFLSMYLATVLGNLLIILSV) traverse the membrane as a helical segment. The Cytoplasmic portion of the chain corresponds to 50 to 57 (SIDSCLHT). The helical transmembrane segment at 58 to 79 (PMYFFLSNLSFVDICFSFTTVP) threads the bilayer. The Extracellular portion of the chain corresponds to 80 to 100 (KMLANHILETQTISFCGCLTQ). Cys-97 and Cys-189 are oxidised to a cystine. Residues 101–120 (MYFVFMFVDMDNFLLAVMAY) form a helical membrane-spanning segment. At 121–139 (DHFVAVCHPLHYTAKMTHQ) the chain is on the cytoplasmic side. The helical transmembrane segment at 140-158 (LCALLVAGLWVVANLNVLL) threads the bilayer. Over 159 to 196 (HTLLMAPLSFCADNAITHFFCDVTPLLKLSCSDTHLNE) the chain is Extracellular. The helical transmembrane segment at 197 to 219 (VIILSEGALVMITPFLCILASYM) threads the bilayer. Over 220–236 (HITCTVLKVPSTKGRWK) the chain is Cytoplasmic. Residues 237-259 (AFSTCGSHLAVVLLFYSTIIAVY) traverse the membrane as a helical segment. Topologically, residues 260–272 (FNPLSSHSAEKDT) are extracellular. The helical transmembrane segment at 273–292 (MATVLYTVVTPMLNPFIYSL) threads the bilayer. The Cytoplasmic portion of the chain corresponds to 293 to 312 (RNRYLKGALKKVVGRVVFSV).

This sequence belongs to the G-protein coupled receptor 1 family.

The protein localises to the cell membrane. Functionally, odorant receptor. This chain is Olfactory receptor 1F1 (OR1F1), found in Homo sapiens (Human).